Consider the following 162-residue polypeptide: CASP-like protein 1C1 (162 aa).

Over 1-7 the chain is Cytoplasmic; that stretch reads MAKLHRL. A helical transmembrane segment spans residues 8-28; the sequence is ISAVLRLAAAGAAAAAAIIMV. The Extracellular portion of the chain corresponds to 29-50; the sequence is TSHETTSFFGIEMEAKYSYTPS. The chain crosses the membrane as a helical span at residues 51 to 71; the sequence is FVFFVVAFAVAFAYSLLALLA. Residues 72 to 79 lie on the Cytoplasmic side of the membrane; sequence RPGSTASR. A helical transmembrane segment spans residues 80 to 100; sequence LLLLSDVMVGMLLTGAVAATG. Over 101 to 128 the chain is Extracellular; that stretch reads AISQVGKSGNEHAGWLPICAQVQAYCSH. Residues 129–149 traverse the membrane as a helical segment; it reads VMGALIAGFVSLLLYFLIIMY. The Cytoplasmic portion of the chain corresponds to 150–162; the sequence is SLHAVAEPLCSCH.

This sequence belongs to the Casparian strip membrane proteins (CASP) family. In terms of assembly, homodimer and heterodimers.

It localises to the cell membrane. This is CASP-like protein 1C1 from Sorghum bicolor (Sorghum).